Consider the following 224-residue polypeptide: Putative ribonuclease Z (224 aa).

Zn(2+) contacts are provided by Asp120 and His184.

This sequence belongs to the RNase Z family. Homodimer. The cofactor is Zn(2+).

The enzyme catalyses Endonucleolytic cleavage of RNA, removing extra 3' nucleotides from tRNA precursor, generating 3' termini of tRNAs. A 3'-hydroxy group is left at the tRNA terminus and a 5'-phosphoryl group is left at the trailer molecule.. In terms of biological role, zinc phosphodiesterase, which displays some tRNA 3'-processing endonuclease activity. Probably involved in tRNA maturation, by removing a 3'-trailer from precursor tRNA. The polypeptide is Putative ribonuclease Z (rnz) (Mycobacterium tuberculosis (strain CDC 1551 / Oshkosh)).